The following is a 534-amino-acid chain: MFS transporter fmqE (534 aa).

The next 12 helical transmembrane spans lie at 48–68 (LLLFAAYRVTHLAILPFVCAS), 109–129 (LWTSMTNLGQALGSLIAGFLA), 136–156 (WTAVSLAILSIVGTFILVFSS), 169–189 (GAVVGGLMAIGTTYAADVAPI), 194–214 (ALLQAIVFFGVAMQGVSLGIV), 228–248 (IVFGIQWAFATLVLIAAFLVP), 326–346 (AIGVPFLTQNIYFLITVGLNV), 349–369 (VFDIGIGGFFLGCLFVMLGWL), 379–399 (LWLWGLIGNFLCMVTIGALGF), 407–427 (LAIAVIMNVLISYGVYATVGV), 447–467 (VAFIVGAVGGWLFNFITPYMY), and 478–498 (TGFVYAGLTVVVAVISWFLVP).

Belongs to the major facilitator superfamily. Sugar transporter (TC 2.A.1.1) family.

It is found in the cytoplasmic vesicle membrane. Its function is as follows. MFS transporter; part of the gene cluster that mediates the biosynthesis of the antitumor cytotoxic peptidyl alkaloids fumiquinazolines that confer a dual-usage capability to defend against phagocytes in the environment and animal hosts. Probably involved in fumiquinazolines metabolism and transport. This chain is MFS transporter fmqE, found in Aspergillus fumigatus (strain ATCC MYA-4609 / CBS 101355 / FGSC A1100 / Af293) (Neosartorya fumigata).